A 152-amino-acid chain; its full sequence is Smith-Magenis syndrome chromosomal region candidate gene 5 protein homolog (152 aa).

Positions 41–77 (TPCAGPSSQAPPQPPQASPPAAPDHSRTPSLLASSHS) are disordered. A compositionally biased stretch (pro residues) spans 49–62 (QAPPQPPQASPPAA).

This chain is Smith-Magenis syndrome chromosomal region candidate gene 5 protein homolog (SMCR5), found in Macaca fascicularis (Crab-eating macaque).